Here is a 132-residue protein sequence, read N- to C-terminus: Large-conductance mechanosensitive channel (132 aa).

3 helical membrane passes run 14-34 (VVDL…VSSL), 38-58 (IITP…LHFG), and 67-87 (GNFI…FMFV).

This sequence belongs to the MscL family. Homopentamer.

Its subcellular location is the cell membrane. Its function is as follows. Channel that opens in response to stretch forces in the membrane lipid bilayer. May participate in the regulation of osmotic pressure changes within the cell. This Bacillus cereus (strain B4264) protein is Large-conductance mechanosensitive channel.